The primary structure comprises 166 residues: FMN reductase (NADH) RutF (166 aa).

It belongs to the non-flavoprotein flavin reductase family. RutF subfamily.

It carries out the reaction FMNH2 + NAD(+) = FMN + NADH + 2 H(+). Catalyzes the reduction of FMN to FMNH2 which is used to reduce pyrimidine by RutA via the Rut pathway. This chain is FMN reductase (NADH) RutF, found in Cronobacter sakazakii (strain ATCC BAA-894) (Enterobacter sakazakii).